The primary structure comprises 23 residues: MWTKPAYTDLRIGFEVTMYFASR.

Residues 15–19 (EVTMY) constitute a cross-link (pyrroloquinoline quinone (Glu-Tyr)).

Belongs to the PqqA family.

Its pathway is cofactor biosynthesis; pyrroloquinoline quinone biosynthesis. Required for coenzyme pyrroloquinoline quinone (PQQ) biosynthesis. PQQ is probably formed by cross-linking a specific glutamate to a specific tyrosine residue and excising these residues from the peptide. The chain is Coenzyme PQQ synthesis protein A from Pseudomonas putida (strain W619).